The sequence spans 157 residues: Protein Smg homolog (157 aa).

Belongs to the Smg family.

This is Protein Smg homolog from Xanthomonas oryzae pv. oryzae (strain MAFF 311018).